We begin with the raw amino-acid sequence, 148 residues long: Large ribosomal subunit protein bL9 (148 aa).

Belongs to the bacterial ribosomal protein bL9 family.

In terms of biological role, binds to the 23S rRNA. The protein is Large ribosomal subunit protein bL9 of Bifidobacterium adolescentis (strain ATCC 15703 / DSM 20083 / NCTC 11814 / E194a).